The sequence spans 210 residues: Glutathione S-transferase P 2 (210 aa).

The 80-residue stretch at 2-81 (PPYTIVYFPS…HLGRSLGLYG (80 aa)) folds into the GST N-terminal domain. Glutathione-binding positions include Y8, R14, W39, K45, 52–53 (QL), and 65–66 (QS). One can recognise a GST C-terminal domain in the interval 83–204 (NQREAAQVDM…SSPEHVNRPI (122 aa)).

It belongs to the GST superfamily. Pi family. As to quaternary structure, homodimer. As to expression, selectively expressed in gall bladder, colon, heart, and skeletal muscle.

It catalyses the reaction RX + glutathione = an S-substituted glutathione + a halide anion + H(+). In terms of biological role, conjugation of reduced glutathione to a wide number of exogenous and endogenous hydrophobic electrophiles. Cannot metabolize 1-chloro-2,4-dinitrobenzene. In Mus musculus (Mouse), this protein is Glutathione S-transferase P 2 (Gstp2).